The chain runs to 926 residues: Bifunctional uridylyltransferase/uridylyl-removing enzyme (926 aa).

The uridylyltransferase stretch occupies residues 1–379; the sequence is MPVSFLSLAS…PKSRRSGASK (379 aa). Positions 380–736 are uridylyl-removing; it reads QIDGFPVIQG…GHEMPAYDAT (357 aa). The HD domain occupies 496–618; sequence VDEHAIRALD…VKSPERLRLL (123 aa). ACT domains are found at residues 737–814 and 849–926; these read MISL…IRSS and VIEV…ISEK.

Belongs to the GlnD family. Requires Mg(2+) as cofactor.

It carries out the reaction [protein-PII]-L-tyrosine + UTP = [protein-PII]-uridylyl-L-tyrosine + diphosphate. The enzyme catalyses [protein-PII]-uridylyl-L-tyrosine + H2O = [protein-PII]-L-tyrosine + UMP + H(+). Uridylyltransferase (UTase) activity is inhibited by glutamine, while glutamine activates uridylyl-removing (UR) activity. Its function is as follows. Modifies, by uridylylation and deuridylylation, the PII regulatory proteins (GlnB and homologs), in response to the nitrogen status of the cell that GlnD senses through the glutamine level. Under low glutamine levels, catalyzes the conversion of the PII proteins and UTP to PII-UMP and PPi, while under higher glutamine levels, GlnD hydrolyzes PII-UMP to PII and UMP (deuridylylation). Thus, controls uridylylation state and activity of the PII proteins, and plays an important role in the regulation of nitrogen assimilation and metabolism. The protein is Bifunctional uridylyltransferase/uridylyl-removing enzyme of Zymomonas mobilis subsp. mobilis (strain ATCC 31821 / ZM4 / CP4).